Consider the following 525-residue polypeptide: Nucleolar and spindle-associated protein 1-C (525 aa).

4 disordered regions span residues 43–203 (FYPE…KKLH), 250–293 (TPVS…FSAA), 373–398 (TPES…EKAK), and 452–525 (LSRP…VPVQ). The span at 58–69 (SSLTDTDELNSS) shows a compositional bias: polar residues. Residues 82-92 (THRRGRGRKPL) are compositionally biased toward basic residues. Basic and acidic residues predominate over residues 93–102 (KNHDTPKDEF). The segment covering 113 to 127 (SLASETDNTQHQNCL) has biased composition (polar residues). Residues 160-169 (TTEKRQKKAS) are compositionally biased toward basic and acidic residues. The span at 270 to 285 (PPTTGASPSRTPTNQR) shows a compositional bias: polar residues. Polar residues predominate over residues 476-494 (CGSNNNVSVLKNNFKQPHL). Residues 495 to 514 (QTREDRRKQHEQDRKGKRDQ) are compositionally biased toward basic and acidic residues.

This sequence belongs to the NUSAP family. In terms of assembly, interacts with DNA, microtubules, ipo7, kpna2 and kpnb1. Microtubule stabilization is inhibited by ipo7 and kpna2, while microtubule bundling is inhibited by kpnb1. Active GTP-bound ran causes dissociation of ipo7 and kpnb1.

It is found in the cytoplasm. The protein localises to the nucleus. It localises to the cytoskeleton. The protein resides in the spindle. Microtubule-associated protein with the capacity to bundle and stabilize microtubules. May associate with chromosomes and promote the organization of meiotic or mitotic spindle microtubules around them. The chain is Nucleolar and spindle-associated protein 1-C (nusap1-c) from Xenopus laevis (African clawed frog).